Here is a 373-residue protein sequence, read N- to C-terminus: COP9 signalosome complex subunit 5 (373 aa).

In terms of domain architecture, MPN spans 66–201 (CLISRLATTK…IGAFRTLPSK (136 aa)). Positions 147, 149, and 160 each coordinate Zn(2+). The short motif at 147–160 (HSHPGYGCWLSNID) is the JAMM motif element. Residues 289–325 (FTHERSNSISSTSSLTTRHTTDVEMDDQESAQSSLDI) are disordered. Low complexity predominate over residues 295 to 306 (NSISSTSSLTTR).

This sequence belongs to the peptidase M67A family. CSN5 subfamily. Component of the COP9 signalosome (CSN) complex.

The protein localises to the cytoplasm. Its subcellular location is the nucleus. In terms of biological role, catalytic Component of the COP9 signalosome (CSN) complex that acts as an regulator of the ubiquitin (Ubl) conjugation pathway by mediating the deneddylation of the cullin subunit of SCF-type E3 ubiquitin-protein ligase complexes. The CNS complex is involved in the regulation of the mating pheromone response. The chain is COP9 signalosome complex subunit 5 (RRI1) from Kluyveromyces lactis (strain ATCC 8585 / CBS 2359 / DSM 70799 / NBRC 1267 / NRRL Y-1140 / WM37) (Yeast).